We begin with the raw amino-acid sequence, 213 residues long: tRNA (guanine-N(7)-)-methyltransferase (213 aa).

E44, E69, N96, and D118 together coordinate S-adenosyl-L-methionine. Residue D118 is part of the active site. K122 is a binding site for substrate. The tract at residues 124-129 (RHEKRR) is interaction with RNA. Substrate contacts are provided by residues D154 and 191–194 (TEYE).

Belongs to the class I-like SAM-binding methyltransferase superfamily. TrmB family.

The enzyme catalyses guanosine(46) in tRNA + S-adenosyl-L-methionine = N(7)-methylguanosine(46) in tRNA + S-adenosyl-L-homocysteine. The protein operates within tRNA modification; N(7)-methylguanine-tRNA biosynthesis. Its function is as follows. Catalyzes the formation of N(7)-methylguanine at position 46 (m7G46) in tRNA. The sequence is that of tRNA (guanine-N(7)-)-methyltransferase from Oceanobacillus iheyensis (strain DSM 14371 / CIP 107618 / JCM 11309 / KCTC 3954 / HTE831).